The following is a 546-amino-acid chain: Smad protein daf-8 (546 aa).

An MH1 domain is found at 16–137 (AMAQKVLEET…YRWVELPTCQ (122 aa)). Disordered stretches follow at residues 234 to 268 (LQQSNRQDDEEPGYYRSGLSSPASHAASPREFIPN) and 292 to 317 (ENFSSENNGNRKPTYADGRPITPIEP). A compositionally biased stretch (polar residues) spans 292-302 (ENFSSENNGNR). Residues 349 to 546 (WLKLIYYEEG…APPRICSSRT (198 aa)) enclose the MH2 domain.

This sequence belongs to the dwarfin/SMAD family. In terms of assembly, homodimer. Interacts with R-SMAD daf-14 and co-SMAD daf-3. Interacts with orphan nuclear receptor nhr-69. Expressed in the excretory cell and gonadal distal tip cells (DTCs).

It is found in the cytoplasm. It localises to the nucleus. Probably a receptor-regulated SMAD (R-SMAD) that is an intracellular signal transducer and transcriptional modulator activated by TGF-beta-like daf-7 signaling. Plays a role in TGF-beta-like daf-7 signaling in regulating entry into a developmentally arrested larval state known as dauer, in response to harsh environmental conditions; partially redundant with R-SMAD daf-14. Plays a role in inhibiting mitosis and promoting a switch to meiosis in the germ line, perhaps by down-regulating lag-2 transcription in the gonadal distal tip cells (DTCs). In cooperation with orphan nuclear receptor nhr-69 modulates the Insulin/IGF-1-like signaling (IIS) pathway, perhaps by regulating expression of the potassium channel exp-2, which in turn modulates the secretion of the insulin-like peptide daf-28. This chain is Smad protein daf-8, found in Caenorhabditis elegans.